A 1202-amino-acid chain; its full sequence is MGNLKSVGQEPGPPCGLGLGLGLGLCGKQGPASPAPEPSQAPVPPSPTRPAPDHSPPLTRPPDGPKFPRVKNWEVGSITYDTLSAQAQQDGPCTPRRCLGSLVFPRKLQSRPTQGPSPTEQLLGQARDFINQYYNSIKRSGSQAHEQRLQEVEAEVVATGTYQLRESELVFGAKQAWRNAPRCVGRIQWGKLQVFDARDCRTAQEMFTYICNHIKYATNRGNLRSAITVFPQRYAGRGDFRIWNSQLVRYAGYRQQDGSVRGDPANVEITELCIQHGWTPGNGRFDVLPLLLQAPDEPPELFTLPPELVLEVPLEHPTLEWFAALGLRWYALPAVSNMLLEIGGLEFPAAPFSGWYMSSEIGMRDLCDPHRYNILEDVAVCMDLDTRTTSSLWKDKAAVEINVAVLYSYQLAKVTIVDHHAATASFMKHLENEQKARGGCPADWAWIVPPISGSLTPVFHQEMVNYFLSPAFRYQPDPWKGSAAKGTGITRKKTFKEVANAVKISASLMGTVMAKRVKATILYGSETGRAQSYAQQLGRLFRKAFDPRVLCMDEYDVVSLEHEALVLVVTSTFGNGDPPENGESFAAALMEMSGPYNSSPRPEQHKSYKIRFNSVSCSDPLVSSWRRKRKESSNTDSAGALGTLRFCVFGLGSRAYPHFCAFARAVDTRLEELGGERLLQLGQGDELCGQEEAFRGWAQAAFQAACETFCVGEDAKAAARDIFSPKRSWKRQRYRLSTQAESLQLLPRLTHVHRRKMFQATILSVENLQSSKSTRATILVRLDTGSQEGLQYQPGDHIGVCPPNRPGLVEALLSRVEDPPPSTEPVAVEQLEKGSPGGPPPGWVRDPRLPPCTLRQALTYFLDITSPPSPRLLRLLSTLAEESSEQQELEALSQDPRRYEEWKWFRCPTLLEVLEQFPSVALPAPLILTQLPLLQPRYYSVSSAPSAHPGEIHLTVAVLAYRTQDGLGPLHYGVCSTWMSQLKAGDPVPCFIRGAPSFRLPPDPNLPCILVGPGTGIAPFRGFWQDRLHDIEIKGLQPAPMTLVFGCRCSQLDHLYRDEVLDAQQRGVFGQVLTAFSRDPGSPKTYVQDLLRTELAAEVHRVLCLEQGHMFVCGDVTMATSVLQTVQRILATEGSMELDEAGDVIGVLRDQQRYHEDIFGLTLRTQEVTSRIRTQSFSLQERQLRGAVPWSFDPPTQETPGS.

The tract at residues 1–70 (MGNLKSVGQE…PPDGPKFPRV (70 aa)) is disordered. Gly-2 is lipidated: N-myristoyl glycine. 2 S-palmitoyl cysteine lipidation sites follow: Cys-15 and Cys-26. A compositionally biased stretch (gly residues) spans 15-27 (CGLGLGLGLGLCG). The span at 33–65 (SPAPEPSQAPVPPSPTRPAPDHSPPLTRPPDGP) shows a compositional bias: pro residues. 2 residues coordinate Zn(2+): Cys-93 and Cys-98. Positions 97–485 (RCLGSLVFPR…PDPWKGSAAK (389 aa)) are interaction with NOSIP. A (6R)-L-erythro-5,6,7,8-tetrahydrobiopterin-binding site is contributed by Ser-101. Position 183 (Cys-183) interacts with heme b. Residues Gln-246, Trp-355, Tyr-356, and Glu-360 each contribute to the L-arginine site. Residues Ala-445, Trp-446, and Phe-459 each contribute to the (6R)-L-erythro-5,6,7,8-tetrahydrobiopterin site. Tyr-474 provides a ligand contact to heme b. Residues 489–509 (ITRKKTFKEVANAVKISASLM) are calmodulin-binding. A Phosphothreonine; by AMPK modification is found at Thr-494. The region spanning 519–702 (ATILYGSETG…AFRGWAQAAF (184 aa)) is the Flavodoxin-like domain. FMN contacts are provided by Ser-525, Glu-526, Thr-527, Arg-529, Ser-571, and Thr-572. A phosphoserine mark is found at Ser-614, Ser-632, and Ser-637. Ser-653, Cys-660, Glu-686, and Gln-690 together coordinate FMN. The 247-residue stretch at 755–1001 (RKMFQATILS…IRGAPSFRLP (247 aa)) folds into the FAD-binding FR-type domain. Arg-775 is a binding site for NADP(+). His-797 contributes to the FAD binding site. Residues 817–843 (EDPPPSTEPVAVEQLEKGSPGGPPPGW) form a disordered region. Residue Ser-835 is modified to Phosphoserine. Residues Arg-937, Tyr-939, Ser-940, Thr-955, Ala-957, Tyr-961, Val-974, Cys-975, and Ser-976 each contribute to the FAD site. Thr-1015, Arg-1048, Ser-1077, Arg-1078, Lys-1084, Tyr-1086, and Gln-1088 together coordinate NADP(+). Thr-1174 carries the post-translational modification Phosphothreonine. A Phosphoserine; by AMPK modification is found at Ser-1176. Ser-1178 bears the Phosphoserine mark.

This sequence belongs to the NOS family. As to quaternary structure, homodimer. Interacts with NOSIP and NOSTRIN. Interacts with HSP90AB1. Forms a complex with ASL, ASS1 and SLC7A1; the complex regulates cell-autonomous L-arginine synthesis and citrulline recycling while channeling extracellular L-arginine to nitric oxide synthesis pathway. Heme b serves as cofactor. It depends on FAD as a cofactor. FMN is required as a cofactor. Requires (6R)-L-erythro-5,6,7,8-tetrahydrobiopterin as cofactor. In terms of processing, phosphorylation by AMPK at Ser-1176 in the presence of Ca(2+)-calmodulin (CaM) activates activity. In absence of Ca(2+)-calmodulin, AMPK also phosphorylates Thr-494, resulting in inhibition of activity. In terms of tissue distribution, expressed constitutively by vascular endothelium. Detected in alveolar and serosal epithelial cells as well as in endothelial cells in one day old rat. In adult lung, detected in rare endothelial cells.

The protein resides in the membrane. Its subcellular location is the caveola. The protein localises to the cytoplasm. It is found in the cytoskeleton. It localises to the golgi apparatus. The protein resides in the cell membrane. It carries out the reaction 2 L-arginine + 3 NADPH + 4 O2 + H(+) = 2 L-citrulline + 2 nitric oxide + 3 NADP(+) + 4 H2O. With respect to regulation, stimulated by calcium/calmodulin. Inhibited by NOSIP and NOSTRIN. In terms of biological role, produces nitric oxide (NO) which is implicated in vascular smooth muscle relaxation through a cGMP-mediated signal transduction pathway. NO mediates vascular endothelial growth factor (VEGF)-induced angiogenesis in coronary vessels and promotes blood clotting through the activation of platelets. In Rattus norvegicus (Rat), this protein is Nitric oxide synthase 3.